We begin with the raw amino-acid sequence, 101 residues long: Urease subunit beta (101 aa).

It belongs to the urease beta subunit family. In terms of assembly, heterotrimer of UreA (gamma), UreB (beta) and UreC (alpha) subunits. Three heterotrimers associate to form the active enzyme.

Its subcellular location is the cytoplasm. It carries out the reaction urea + 2 H2O + H(+) = hydrogencarbonate + 2 NH4(+). Its pathway is nitrogen metabolism; urea degradation; CO(2) and NH(3) from urea (urease route): step 1/1. In Rhizobium rhizogenes (strain K84 / ATCC BAA-868) (Agrobacterium radiobacter), this protein is Urease subunit beta.